The sequence spans 75 residues: ORF2p protein (75 aa).

The important for viral replication in intestinal cells stretch occupies residues 13 to 18; it reads WIGHPV. A transmembrane span lies at residues 23–45; the sequence is IVYLFVGFTPLTLETLHTLNYII. Residues 53–75 form a disordered region; the sequence is APRSPHSDPARMRIPTQPRKAPL.

It is found in the host cytoplasmic vesicle membrane. Functionally, facilitates virus release from intestinal cells in vitro, possibly through the host autophagic pathway. The polypeptide is ORF2p protein (Human enterovirus 71 (strain USA/BrCr/1970) (EV71)).